Here is a 233-residue protein sequence, read N- to C-terminus: Ribosome maturation protein SDO1 homolog (233 aa).

It belongs to the SDO1/SBDS family.

This Aeropyrum pernix (strain ATCC 700893 / DSM 11879 / JCM 9820 / NBRC 100138 / K1) protein is Ribosome maturation protein SDO1 homolog.